A 199-amino-acid chain; its full sequence is Large ribosomal subunit protein bL25 (199 aa).

This sequence belongs to the bacterial ribosomal protein bL25 family. CTC subfamily. Part of the 50S ribosomal subunit; part of the 5S rRNA/L5/L18/L25 subcomplex. Contacts the 5S rRNA. Binds to the 5S rRNA independently of L5 and L18.

Functionally, this is one of the proteins that binds to the 5S RNA in the ribosome where it forms part of the central protuberance. The polypeptide is Large ribosomal subunit protein bL25 (Syntrophobacter fumaroxidans (strain DSM 10017 / MPOB)).